The sequence spans 723 residues: Protein Hook homolog (723 aa).

The Calponin-homology (CH) domain occupies 4–120 (TELCECLVQW…RLLQLILGCA (117 aa)). Coiled coils occupy residues 162–423 (VLPE…MQLQ) and 457–665 (EIKE…IVSA). Positions 682 to 723 (LANGGPMQGGQSFLARQRQATSRRTTVSTTHPGHARSVNFVN) are disordered. Over residues 696 to 711 (ARQRQATSRRTTVSTT) the composition is skewed to low complexity.

Belongs to the hook family. Interacts with microtubules.

The protein localises to the cytoplasm. It is found in the cytoskeleton. Its function is as follows. May function to promote vesicle trafficking and/or fusion. May act to link a number of membrane-bound organelles to the cytoskeleton. The polypeptide is Protein Hook homolog (Branchiostoma floridae (Florida lancelet)).